The sequence spans 830 residues: Ent-cassa-12,15-diene synthase (830 aa).

Positions 1 to 50 (MMLLGSPSSGGYGGKFAGASPAGGTTTMAPSAKQPSSRAPPPGITGGRND) are disordered. Over residues 23 to 37 (GGTTTMAPSAKQPSS) the composition is skewed to polar residues. Mg(2+) is bound by residues Asp577, Asp581, Asn721, and Glu729. The DDXXD motif motif lies at 577 to 581 (DDLFD).

It belongs to the terpene synthase family. Mg(2+) serves as cofactor. As to expression, expressed in roots and stems.

It carries out the reaction ent-copalyl diphosphate = ent-cassa-12,15-diene + diphosphate. Its function is as follows. Involved in phytocassane phytoalexins biosynthesis. Catalyzes the conversion of ent-copalyl diphosphate to the phytoalexin precursor ent-cassa-12,15-diene. This is Ent-cassa-12,15-diene synthase (KSL7) from Oryza sativa subsp. indica (Rice).